We begin with the raw amino-acid sequence, 186 residues long: UPF0301 protein PM1869 (186 aa).

This sequence belongs to the UPF0301 (AlgH) family.

This chain is UPF0301 protein PM1869, found in Pasteurella multocida (strain Pm70).